Consider the following 284-residue polypeptide: 2-dehydro-3-deoxyphosphooctonate aldolase (284 aa).

Belongs to the KdsA family.

Its subcellular location is the cytoplasm. It carries out the reaction D-arabinose 5-phosphate + phosphoenolpyruvate + H2O = 3-deoxy-alpha-D-manno-2-octulosonate-8-phosphate + phosphate. It participates in carbohydrate biosynthesis; 3-deoxy-D-manno-octulosonate biosynthesis; 3-deoxy-D-manno-octulosonate from D-ribulose 5-phosphate: step 2/3. The protein operates within bacterial outer membrane biogenesis; lipopolysaccharide biosynthesis. The chain is 2-dehydro-3-deoxyphosphooctonate aldolase from Escherichia coli O157:H7.